A 372-amino-acid polypeptide reads, in one-letter code: Alanine dehydrogenase 1 (372 aa).

Residue His-94 is part of the active site. NAD(+) is bound at residue 170–200; the sequence is TYVIFGGGVAATNAANVALGLNAKVIIIELN.

It belongs to the AlaDH/PNT family.

It carries out the reaction L-alanine + NAD(+) + H2O = pyruvate + NH4(+) + NADH + H(+). The protein operates within amino-acid degradation; L-alanine degradation via dehydrogenase pathway; NH(3) and pyruvate from L-alanine: step 1/1. Functionally, may play a role in cell wall synthesis as L-alanine is an important constituent of the peptidoglycan layer. This Staphylococcus aureus (strain NCTC 8325 / PS 47) protein is Alanine dehydrogenase 1 (ald1).